A 346-amino-acid chain; its full sequence is Glycosyltransferase 1 domain-containing protein 1 (346 aa).

The N-terminal stretch at 1–16 is a signal peptide; sequence MRLLFLAVLRPHTGNA.

Belongs to the glycosyltransferase group 1 family. Glycosyltransferase 4 subfamily.

It is found in the secreted. The chain is Glycosyltransferase 1 domain-containing protein 1 (GLT1D1) from Homo sapiens (Human).